The primary structure comprises 63 residues: Large ribosomal subunit protein uL29 (63 aa).

Belongs to the universal ribosomal protein uL29 family.

The polypeptide is Large ribosomal subunit protein uL29 (Pectobacterium carotovorum subsp. carotovorum (strain PC1)).